The sequence spans 547 residues: Chaperonin GroEL 1 (547 aa).

ATP contacts are provided by residues 30–33, K51, 87–91, G415, and D496; these read TLGP and DGTTT. The interval 525–547 is disordered; the sequence is KPEPKSPAGGPGMGGMGGMDGMM. Positions 533–547 are enriched in gly residues; it reads GGPGMGGMGGMDGMM.

It belongs to the chaperonin (HSP60) family. As to quaternary structure, forms a cylinder of 14 subunits composed of two heptameric rings stacked back-to-back. Interacts with the co-chaperonin GroES.

It is found in the cytoplasm. It catalyses the reaction ATP + H2O + a folded polypeptide = ADP + phosphate + an unfolded polypeptide.. Its function is as follows. Together with its co-chaperonin GroES, plays an essential role in assisting protein folding. The GroEL-GroES system forms a nano-cage that allows encapsulation of the non-native substrate proteins and provides a physical environment optimized to promote and accelerate protein folding. This chain is Chaperonin GroEL 1, found in Cereibacter sphaeroides (strain ATCC 17023 / DSM 158 / JCM 6121 / CCUG 31486 / LMG 2827 / NBRC 12203 / NCIMB 8253 / ATH 2.4.1.) (Rhodobacter sphaeroides).